The following is a 669-amino-acid chain: Acetolactate synthase, mitochondrial (669 aa).

A mitochondrion-targeting transit peptide spans 1–140 (MTVLAPLRRL…PRHEQAAGHA (140 aa)). Position 134 (Glu134) interacts with thiamine diphosphate. FAD contacts are provided by residues Arg236, 351–372 (HGSG…LGVR), and 403–422 (DISP…IEGD). A thiamine pyrophosphate binding region spans residues 497–577 (AHQMWAATFY…VKILILNNEE (81 aa)). The Mg(2+) site is built by Asp548 and Asn575.

Belongs to the TPP enzyme family. Mg(2+) is required as a cofactor. It depends on thiamine diphosphate as a cofactor.

The protein localises to the mitochondrion. It catalyses the reaction 2 pyruvate + H(+) = (2S)-2-acetolactate + CO2. The protein operates within amino-acid biosynthesis; L-isoleucine biosynthesis; L-isoleucine from 2-oxobutanoate: step 1/4. It participates in amino-acid biosynthesis; L-valine biosynthesis; L-valine from pyruvate: step 1/4. This Schizosaccharomyces pombe (strain 972 / ATCC 24843) (Fission yeast) protein is Acetolactate synthase, mitochondrial (ilv1).